The primary structure comprises 208 residues: Large ribosomal subunit protein bL25 (208 aa).

Residues 163–208 are disordered; that stretch reads DYSYNHEPDEVVASILPPQKQEETEAESAAQDVEEPEKGTEEEKEE. The segment covering 198 to 208 has biased composition (basic and acidic residues); it reads PEKGTEEEKEE.

The protein belongs to the bacterial ribosomal protein bL25 family. CTC subfamily. As to quaternary structure, part of the 50S ribosomal subunit; part of the 5S rRNA/L5/L18/L25 subcomplex. Contacts the 5S rRNA. Binds to the 5S rRNA independently of L5 and L18.

This is one of the proteins that binds to the 5S RNA in the ribosome where it forms part of the central protuberance. The sequence is that of Large ribosomal subunit protein bL25 from Bacillus licheniformis (strain ATCC 14580 / DSM 13 / JCM 2505 / CCUG 7422 / NBRC 12200 / NCIMB 9375 / NCTC 10341 / NRRL NRS-1264 / Gibson 46).